Reading from the N-terminus, the 863-residue chain is Ribosomal protein S6 kinase alpha-5 (863 aa).

Residues 1–21 are compositionally biased toward gly residues; that stretch reads MEGEGGGSGGAGTSGDSGDGG. A disordered region spans residues 1 to 22; that stretch reads MEGEGGGSGGAGTSGDSGDGGE. Positions 48 to 317 constitute a Protein kinase 1 domain; it reads FELLKVLGTG…AEEIKEHLFF (270 aa). ATP-binding positions include 54–62 and K80; that span reads LGTGAYGKV. D176 acts as the Proton acceptor in catalysis. S211 bears the Phosphoserine; by autocatalysis mark. The AGC-kinase C-terminal domain occupies 318-386; it reads EKIKWDDLAA…VAPSILFKRN (69 aa). S359 carries the phosphoserine; by MAPK1, MAPK3 and MAPK14 modification. 2 positions are modified to phosphoserine; by autocatalysis: S375 and S380. The 248-residue stretch at 428-675 folds into the Protein kinase 2 domain; sequence DKPLGEGSFS…SCDLWSLGVI (248 aa). Residues 431–440 and K454 contribute to the ATP site; that span reads LGEGSFSICR. The active-site Proton acceptor is the D608. The residue at position 645 (T645) is a Phosphothreonine; by MAPK1, MAPK3 and MAPK14. Residues S711, S721, S755, and S759 each carry the phosphoserine modification. The residue at position 764 (T764) is a Phosphothreonine. The segment at 805 to 863 is disordered; that stretch reads AKRRKMKRTSTSTETRSSSSESSRSSSSQSHGKTTPTKTLQPSNPTEGSNPDTLFQFSD. Low complexity predominate over residues 813 to 832; the sequence is TSTSTETRSSSSESSRSSSS. Phosphoserine; by autocatalysis is present on residues S814, S816, and S822. Residues 833–863 are compositionally biased toward polar residues; it reads QSHGKTTPTKTLQPSNPTEGSNPDTLFQFSD. Residue S862 is modified to Phosphoserine.

Belongs to the protein kinase superfamily. AGC Ser/Thr protein kinase family. S6 kinase subfamily. As to quaternary structure, forms a complex with either MAPK1/ERK2 or MAPK3/ERK1 in quiescent cells which transiently dissociates following mitogenic stimulation. Also associates with MAPK14/p38-alpha. Activated RPS6KA5 associates with and phosphorylates the NF-kappa-B p65 subunit RELA. Interacts with CREBBP and EP300. Mg(2+) is required as a cofactor. In terms of processing, ser-375 and Thr-645 phosphorylation is required for kinase activity. Ser-375 and Ser-211 are autophosphorylated by the C-terminal kinase domain, and their phosphorylation is essential for the catalytic activity of the N-terminal kinase domain. Phosphorylated at Ser-359, Thr-645 and Thr-764 by MAPK1/ERK2, MAPK3/ERK1 and MAPK14/p38-alpha. Autophosphorylated at Ser-814, Ser-816 and Ser-822 by the N-terminal kinase domain. Post-translationally, ubiquitinated.

The protein localises to the nucleus. The catalysed reaction is L-seryl-[protein] + ATP = O-phospho-L-seryl-[protein] + ADP + H(+). The enzyme catalyses L-threonyl-[protein] + ATP = O-phospho-L-threonyl-[protein] + ADP + H(+). Its activity is regulated as follows. Activated by phosphorylation at Ser-359, Thr-645 and Thr-764 by MAPK1/ERK2, MAPK3/ERK1 and MAPK14/p38-alpha, and by further autophosphorylation of Ser-211, Ser-375 and Ser-380 by the activated C-terminal kinase domain. The active N-terminal kinase domain finally phosphorylates downstream substrates, as well as Ser-814, Ser-816 and Ser-822 in its own C-terminal region. In terms of biological role, serine/threonine-protein kinase that is required for the mitogen or stress-induced phosphorylation of the transcription factors CREB1 and ATF1 and for the regulation of the transcription factors RELA, STAT3 and ETV1/ER81, and that contributes to gene activation by histone phosphorylation and functions in the regulation of inflammatory genes. Phosphorylates CREB1 and ATF1 in response to mitogenic or stress stimuli such as UV-C irradiation, epidermal growth factor (EGF) and anisomycin. Plays an essential role in the control of RELA transcriptional activity in response to TNF and upon glucocorticoid, associates in the cytoplasm with the glucocorticoid receptor NR3C1 and contributes to RELA inhibition and repression of inflammatory gene expression. In skeletal myoblasts is required for phosphorylation of RELA at 'Ser-276' during oxidative stress. In erythropoietin-stimulated cells, is necessary for the 'Ser-727' phosphorylation of STAT3 and regulation of its transcriptional potential. Phosphorylates ETV1/ER81 at 'Ser-191' and 'Ser-216', and thereby regulates its ability to stimulate transcription, which may be important during development and breast tumor formation. Directly represses transcription via phosphorylation of 'Ser-1' of histone H2A. Phosphorylates 'Ser-10' of histone H3 in response to mitogenics, stress stimuli and EGF, which results in the transcriptional activation of several immediate early genes, including proto-oncogenes c-fos/FOS and c-jun/JUN. May also phosphorylate 'Ser-28' of histone H3. Mediates the mitogen- and stress-induced phosphorylation of high mobility group protein 1 (HMGN1/HMG14). In lipopolysaccharide-stimulated primary macrophages, acts downstream of the Toll-like receptor TLR4 to limit the production of pro-inflammatory cytokines. Functions probably by inducing transcription of the MAP kinase phosphatase DUSP1 and the anti-inflammatory cytokine interleukin 10 (IL10), via CREB1 and ATF1 transcription factors. Plays a role in neuronal cell death by mediating the downstream effects of excitotoxic injury. Phosphorylates TRIM7 at 'Ser-106' in response to growth factor signaling via the MEK/ERK pathway, thereby stimulating its ubiquitin ligase activity. In Mus musculus (Mouse), this protein is Ribosomal protein S6 kinase alpha-5 (Rps6ka5).